Reading from the N-terminus, the 259-residue chain is Pro-opiomelanocortin (259 aa).

An N-terminal signal peptide occupies residues 1 to 22 (MLRSVWVYSLGLAVLLQQSGRE). Gln-23 is subject to Pyrrolidone carboxylic acid. 2 disulfide bridges follow: Cys-24–Cys-46 and Cys-30–Cys-42. Residues 113–142 (PQAEEEMEESESSQQQRREDKRSYSMEHFR) form a disordered region. Over residues 128–142 (QRREDKRSYSMEHFR) the composition is skewed to basic and acidic residues. Val-147 carries the valine amide modification.

This sequence belongs to the POMC family. Specific enzymatic cleavages at paired basic residues yield the different active peptides.

The protein localises to the secreted. Stimulates the adrenal glands to release cortisol. Functionally, anorexigenic peptide. Increases the pigmentation of skin by increasing melanin production in melanocytes. In terms of biological role, increases the pigmentation of skin by increasing melanin production in melanocytes. Its function is as follows. Endogenous orexigenic opiate. Endogenous opiate. In Lepisosteus osseus (Long-nosed gar), this protein is Pro-opiomelanocortin (pomc).